The sequence spans 229 residues: Cytidylate kinase (229 aa).

10–18 (GFSSCGKST) is a binding site for ATP.

Belongs to the cytidylate kinase family. Type 1 subfamily.

The protein resides in the cytoplasm. The catalysed reaction is CMP + ATP = CDP + ADP. It carries out the reaction dCMP + ATP = dCDP + ADP. This is Cytidylate kinase from Bacteroides thetaiotaomicron (strain ATCC 29148 / DSM 2079 / JCM 5827 / CCUG 10774 / NCTC 10582 / VPI-5482 / E50).